Consider the following 520-residue polypeptide: Putative cytochrome P450 CYP13A5 (520 aa).

Residue Cys464 participates in heme binding.

Belongs to the cytochrome P450 family. The cofactor is heme.

In terms of biological role, cytochromes P450 are a group of heme-thiolate monooxygenases. They oxidize a variety of structurally unrelated compounds, including steroids, fatty acids, and xenobiotics. This is Putative cytochrome P450 CYP13A5 (cyp-13A5) from Caenorhabditis elegans.